Consider the following 183-residue polypeptide: Apo-citrate lyase phosphoribosyl-dephospho-CoA transferase (183 aa).

Belongs to the CitX family.

The enzyme catalyses apo-[citrate lyase ACP] + 2'-(5''-triphospho-alpha-D-ribosyl)-3'-dephospho-CoA = holo-[citrate lyase ACP] + diphosphate. Functionally, transfers 2-(5''-triphosphoribosyl)-3'-dephosphocoenzyme-A on a serine residue to the apo-acyl carrier protein (gamma chain) of the citrate lyase to yield holo-acyl carrier protein. This Escherichia coli O6:K15:H31 (strain 536 / UPEC) protein is Apo-citrate lyase phosphoribosyl-dephospho-CoA transferase.